We begin with the raw amino-acid sequence, 170 residues long: Shikimate kinase (170 aa).

Residue 15-20 coordinates ATP; that stretch reads GAGKTT. T19 serves as a coordination point for Mg(2+). Residues D37, R61, and G83 each contribute to the substrate site. An ATP-binding site is contributed by R121. R140 provides a ligand contact to substrate.

It belongs to the shikimate kinase family. Monomer. The cofactor is Mg(2+).

It localises to the cytoplasm. It catalyses the reaction shikimate + ATP = 3-phosphoshikimate + ADP + H(+). It functions in the pathway metabolic intermediate biosynthesis; chorismate biosynthesis; chorismate from D-erythrose 4-phosphate and phosphoenolpyruvate: step 5/7. In terms of biological role, catalyzes the specific phosphorylation of the 3-hydroxyl group of shikimic acid using ATP as a cosubstrate. This is Shikimate kinase from Neisseria meningitidis serogroup C (strain 053442).